A 660-amino-acid chain; its full sequence is Acetyl-coenzyme A synthetase (660 aa).

CoA is bound by residues 197 to 200 and T317; that span reads RGGK. Residues 397 to 399, 421 to 426, D512, and R528 contribute to the ATP site; these read GEP and DTWWQT. S536 contributes to the CoA binding site. Position 539 (R539) interacts with ATP. Mg(2+) contacts are provided by V550, H552, and V555. The residue at position 625 (K625) is an N6-acetyllysine.

It belongs to the ATP-dependent AMP-binding enzyme family. It depends on Mg(2+) as a cofactor. In terms of processing, acetylated. Deacetylation by the SIR2-homolog deacetylase activates the enzyme.

It catalyses the reaction acetate + ATP + CoA = acetyl-CoA + AMP + diphosphate. Catalyzes the conversion of acetate into acetyl-CoA (AcCoA), an essential intermediate at the junction of anabolic and catabolic pathways. AcsA undergoes a two-step reaction. In the first half reaction, AcsA combines acetate with ATP to form acetyl-adenylate (AcAMP) intermediate. In the second half reaction, it can then transfer the acetyl group from AcAMP to the sulfhydryl group of CoA, forming the product AcCoA. The polypeptide is Acetyl-coenzyme A synthetase (Burkholderia mallei (strain NCTC 10247)).